The following is a 569-amino-acid chain: Laccase-14 (569 aa).

The first 33 residues, 1-33, serve as a signal peptide directing secretion; it reads MEFKLNIPNTIIKTLQTIVFFLFVLLAFQIAEA. Plastocyanin-like domains are found at residues 41–157 and 167–320; these read KIKS…PKRG and REIP…YKGD. N-linked (GlcNAc...) asparagine glycosylation is present at Asn87. Residues His91, His93, His136, and His138 each coordinate Cu cation. N-linked (GlcNAc...) asparagine glycosylation is found at Asn190, Asn249, Asn336, Asn374, Asn395, Asn430, and Asn452. One can recognise a Plastocyanin-like 3 domain in the interval 420 to 553; the sequence is DFPRNPPTKF…NTVFIVKDGP (134 aa). Positions 470, 473, 475, 532, 533, 534, 538, and 543 each coordinate Cu cation.

The protein belongs to the multicopper oxidase family. It depends on Cu cation as a cofactor. In terms of tissue distribution, expressed at low levels in flowers and siliques.

It localises to the secreted. The protein localises to the extracellular space. It is found in the apoplast. The enzyme catalyses 4 hydroquinone + O2 = 4 benzosemiquinone + 2 H2O. Lignin degradation and detoxification of lignin-derived products. The sequence is that of Laccase-14 (LAC14) from Arabidopsis thaliana (Mouse-ear cress).